The following is a 358-amino-acid chain: Peptide chain release factor 1 (358 aa).

An N5-methylglutamine modification is found at Gln233.

It belongs to the prokaryotic/mitochondrial release factor family. In terms of processing, methylated by PrmC. Methylation increases the termination efficiency of RF1.

The protein resides in the cytoplasm. In terms of biological role, peptide chain release factor 1 directs the termination of translation in response to the peptide chain termination codons UAG and UAA. The sequence is that of Peptide chain release factor 1 from Staphylococcus saprophyticus subsp. saprophyticus (strain ATCC 15305 / DSM 20229 / NCIMB 8711 / NCTC 7292 / S-41).